A 242-amino-acid polypeptide reads, in one-letter code: Lactate utilization protein A 2 (242 aa).

This sequence belongs to the LutA/YkgE family.

Its function is as follows. Is involved in L-lactate degradation and allows cells to grow with lactate as the sole carbon source. The sequence is that of Lactate utilization protein A 2 from Bacillus cereus (strain AH820).